A 551-amino-acid polypeptide reads, in one-letter code: Ubiquitin domain-containing protein DSK2b (551 aa).

The 76-residue stretch at 18 to 93 folds into the Ubiquitin-like domain; sequence VAVNIRCSNG…IHMVRGSAPS (76 aa). The tract at residues 88–127 is disordered; it reads RGSAPSSAPPPAPAASQTTAPSVTRGVGSDNSSNLGGASP. 2 consecutive STI1 domains span residues 143–184 and 197–236; these read GNAM…QNLM and NPQM…MREM. A compositionally biased stretch (polar residues) spans 294–319; that stretch reads QGVTTQGSDASNNSSTPNAGTGTIPN. The tract at residues 294–336 is disordered; that stretch reads QGVTTQGSDASNNSSTPNAGTGTIPNANPLPNPWGATGGQTTA. STI1 domains are found at residues 373–410 and 414–449; these read SPLG…MNQL and NPQL…MQQM. The interval 455–475 is disordered; that stretch reads SLSQNRNTASQDAGQTGAATG. The segment covering 465-475 has biased composition (low complexity); that stretch reads QDAGQTGAATG. One can recognise a UBA domain in the interval 504-548; it reads PPEERYATQLQQLQEMGFYDRAENIRALLATNGNVNAAVERLLGS.

Interacts with 'Lys-48'-linked polyubiquitin chains via its UBA domain. Interacts with RPN10 via its ubiquitin-like domain. Interacts with PEX2 and PEX12. In terms of tissue distribution, ubiquitous.

Its subcellular location is the nucleus. It localises to the cytoplasm. Its function is as follows. Binds and presumably selects ubiquitin-conjugates for destruction. Prefers multiubiquitin chains rather than single ubiquitins, with a binding affinity for 'Lys-48'-linked ubiquitin chains. Acts as a ubiquitin receptor that associates with the 26S proteasomal docking subunit RPN10 for the indirect recognition of ubiquitinated substrates of ubiquitin/26S proteasome-mediated proteolysis (UPP). This chain is Ubiquitin domain-containing protein DSK2b (DSK2B), found in Arabidopsis thaliana (Mouse-ear cress).